The primary structure comprises 1193 residues: Kinesin-related protein 3 (1193 aa).

The 327-residue stretch at 3-329 folds into the Kinesin motor domain; sequence SIRVVCRFRP…LRFGSRAKNI (327 aa). 85–92 provides a ligand contact to ATP; sequence GQTGSGKT. Disordered stretches follow at residues 377–429, 573–600, 611–630, 638–665, 973–1016, 1032–1114, and 1127–1193; these read KSSG…SSNV, SSIA…KHAD, LLQR…TATS, ISES…ATSS, GGGG…SANL, KAEP…PVKI, and FKKK…QQKD. Over residues 405–429 the composition is skewed to low complexity; sequence SSNLSNSVNSTSNLNTSSNTSSSNV. Residues 450 to 962 adopt a coiled-coil conformation; that stretch reads ELIKVLQEKC…SQVGVDAQNT (513 aa). 2 stretches are compositionally biased toward polar residues: residues 573–585 and 614–630; these read SSIA…TPKS and RTPS…TATS. Low complexity-rich tracts occupy residues 643–665 and 985–1006; these read NIGS…ATSS and HSSS…NNNH. Over residues 1007-1016 the composition is skewed to polar residues; the sequence is TTPTPLSANL. Low complexity-rich tracts occupy residues 1044-1078, 1086-1109, and 1132-1149; these read NTSI…IGNS, NNNS…LNGN, and PSST…QSPQ. Polar residues-rich tracts occupy residues 1150–1165 and 1174–1193; these read TPSH…ISPN and FSYT…QQKD.

It belongs to the TRAFAC class myosin-kinesin ATPase superfamily. Kinesin family. Kinesin subfamily. As to quaternary structure, dimer.

It is found in the cytoplasm. The protein resides in the cytoskeleton. Functionally, microtubule-associated force-producing protein that plays a role in organelle transport. Its motor activity is directed toward the microtubule's plus end. The maximal velocity in an inverted motility assay (moving microtubules on fixed motors) was 1.96 um/s. This Dictyostelium discoideum (Social amoeba) protein is Kinesin-related protein 3 (kif3).